The primary structure comprises 338 residues: Lipoate-protein ligase A (338 aa).

The BPL/LPL catalytic domain occupies 29-216 (PATQRVLFLW…AFFAHYGERV (188 aa)). ATP is bound by residues R71, 76–79 (GAVF), and K134. K134 lines the (R)-lipoate pocket.

The protein belongs to the LplA family. In terms of assembly, monomer.

The protein resides in the cytoplasm. The catalysed reaction is L-lysyl-[lipoyl-carrier protein] + (R)-lipoate + ATP = N(6)-[(R)-lipoyl]-L-lysyl-[lipoyl-carrier protein] + AMP + diphosphate + H(+). It participates in protein modification; protein lipoylation via exogenous pathway; protein N(6)-(lipoyl)lysine from lipoate: step 1/2. Its pathway is protein modification; protein lipoylation via exogenous pathway; protein N(6)-(lipoyl)lysine from lipoate: step 2/2. In terms of biological role, catalyzes both the ATP-dependent activation of exogenously supplied lipoate to lipoyl-AMP and the transfer of the activated lipoyl onto the lipoyl domains of lipoate-dependent enzymes. The chain is Lipoate-protein ligase A from Escherichia coli O81 (strain ED1a).